The primary structure comprises 389 residues: Protein MEI2-like 7 (389 aa).

The span at 170-184 (RRGMSKVYKPRKPQR) shows a compositional bias: basic residues. The disordered stretch occupies residues 170–211 (RRGMSKVYKPRKPQRAGRERSPSPSPVFTTRPMSPTPPMQKL). Residues 216–320 (TTVMVRNIPN…KIIDIRAARI (105 aa)) form the RRM domain. A disordered region spans residues 351–370 (PRDGSTAGAGAPSPPAVKTV).

Probable RNA-binding protein that may play a role in growth regulation. This is Protein MEI2-like 7 (OML7) from Oryza sativa subsp. japonica (Rice).